Consider the following 436-residue polypeptide: POU domain, class 2, transcription factor 3 (436 aa).

Disordered stretches follow at residues methionine 1–aspartate 40, glutamine 140–serine 186, and alanine 256–phenylalanine 278. One can recognise a POU-specific domain in the interval aspartate 183–glutamate 257. The span at serine 258–serine 275 shows a compositional bias: low complexity. The homeobox DNA-binding region spans lysine 281 to asparagine 340. A disordered region spans residues leucine 363–asparagine 421. Low complexity-rich tracts occupy residues serine 381–glycine 397 and alanine 405–asparagine 421.

It belongs to the POU transcription factor family. Class-2 subfamily. Interacts (via the POU domain) with POU2AF1 and POU2AF2 in a DNA-dependent manner; this interaction recruits POU2AF2 to chromatin and increases POU2F3 transactivation activity. In terms of tissue distribution, specifically expressed in epidermis and cultured keratinocytes.

The protein localises to the nucleus. Its function is as follows. Transcription factor that binds to the octamer motif (5'-ATTTGCAT-3') and regulates cell type-specific differentiation pathways. Involved in the regulation of keratinocytes differentiation. The POU2F3-POU2AF2/POU2AF3 complex drives the expression of tuft-cell-specific genes, a rare chemosensory cells that coordinate immune and neural functions within mucosal epithelial tissues. This Homo sapiens (Human) protein is POU domain, class 2, transcription factor 3.